The primary structure comprises 159 residues: Transmembrane protein 42 (159 aa).

Transmembrane regions (helical) follow at residues 37–57, 59–79, 100–120, and 124–144; these read FWGV…AASA, LAFG…VMAS, IASV…GYVL, and CQEV…TLIH.

It is found in the membrane. This Homo sapiens (Human) protein is Transmembrane protein 42 (TMEM42).